Consider the following 490-residue polypeptide: Serine hydroxymethyltransferase (490 aa).

Residues Leu-179 and 183–185 each bind (6S)-5,6,7,8-tetrahydrofolate; that span reads GHL. An N6-(pyridoxal phosphate)lysine modification is found at Lys-291. Lys-362 participates in a covalent cross-link: Isoglutamyl lysine isopeptide (Lys-Gln) (interchain with Q-Cter in protein Pup).

It belongs to the SHMT family. In terms of assembly, homodimer. Pyridoxal 5'-phosphate serves as cofactor.

Its subcellular location is the cytoplasm. It carries out the reaction (6R)-5,10-methylene-5,6,7,8-tetrahydrofolate + glycine + H2O = (6S)-5,6,7,8-tetrahydrofolate + L-serine. It functions in the pathway one-carbon metabolism; tetrahydrofolate interconversion. The protein operates within amino-acid biosynthesis; glycine biosynthesis; glycine from L-serine: step 1/1. Functionally, catalyzes the reversible interconversion of serine and glycine with tetrahydrofolate (THF) serving as the one-carbon carrier. This reaction serves as the major source of one-carbon groups required for the biosynthesis of purines, thymidylate, methionine, and other important biomolecules. Also exhibits THF-independent aldolase activity toward beta-hydroxyamino acids, producing glycine and aldehydes, via a retro-aldol mechanism. This is Serine hydroxymethyltransferase from Mycolicibacterium smegmatis (strain ATCC 700084 / mc(2)155) (Mycobacterium smegmatis).